Reading from the N-terminus, the 57-residue chain is Andropin (57 aa).

The signal sequence occupies residues 1–23 (MKYFVVLVVLALILAITVDPSDA).

It belongs to the andropin family. Ejaculatory duct of adult males.

The protein localises to the secreted. Functionally, male-specific peptide with moderate activity against Gram-positive bacteria. This Drosophila sechellia (Fruit fly) protein is Andropin (Anp).